Here is a 186-residue protein sequence, read N- to C-terminus: Casparian strip membrane protein 3 (186 aa).

Residues 1–26 (MTKSTYVELGEEKTSNQKGNMKRGVS) lie on the Cytoplasmic side of the membrane. Residues 27–47 (ILDFILRLIAIVATLASAIAM) traverse the membrane as a helical segment. The Extracellular segment spans residues 48–74 (GTTDESLPFFTQFVRFRANYDDLPTLR). Residues 75-95 (FFVVASAIVSGYLILSLPLSI) form a helical membrane-spanning segment. Topologically, residues 96 to 107 (LHIIRSSAGMTR) are cytoplasmic. Residues 108-128 (VIFIILDTVMLGLLTAGSSAA) traverse the membrane as a helical segment. The Extracellular segment spans residues 129-161 (ASIVYLAHKGNRKANWFAFCQQYNSFCERISGS). The chain crosses the membrane as a helical span at residues 162 to 182 (LIGSFIAIPLFIMLILLSALV). Topologically, residues 183-186 (LSRR) are cytoplasmic.

Belongs to the Casparian strip membrane proteins (CASP) family. As to quaternary structure, homodimer and heterodimers.

It is found in the cell membrane. Its function is as follows. Regulates membrane-cell wall junctions and localized cell wall deposition. Required for establishment of the Casparian strip membrane domain (CSD) and the subsequent formation of Casparian strips, a cell wall modification of the root endodermis that determines an apoplastic barrier between the intraorganismal apoplasm and the extraorganismal apoplasm and prevents lateral diffusion. This Medicago truncatula (Barrel medic) protein is Casparian strip membrane protein 3.